Reading from the N-terminus, the 388-residue chain is D-alanyl-D-alanine carboxypeptidase DacD (388 aa).

An N-terminal signal peptide occupies residues 1 to 21 (MKRRLIIAASLFVFNLSSGFA). S63 functions as the Acyl-ester intermediate in the catalytic mechanism. K66 serves as the catalytic Proton acceptor. The active site involves S129. K232 contacts substrate.

It belongs to the peptidase S11 family.

The protein localises to the cell inner membrane. It carries out the reaction Preferential cleavage: (Ac)2-L-Lys-D-Ala-|-D-Ala. Also transpeptidation of peptidyl-alanyl moieties that are N-acyl substituents of D-alanine.. It functions in the pathway cell wall biogenesis; peptidoglycan biosynthesis. Removes C-terminal D-alanyl residues from sugar-peptide cell wall precursors. The protein is D-alanyl-D-alanine carboxypeptidase DacD (dacD) of Escherichia coli (strain K12).